The chain runs to 331 residues: Biotin synthase (331 aa).

A Radical SAM core domain is found at 52 to 277 (PDVEVEGIIS…RTMLRFAGGR (226 aa)). [4Fe-4S] cluster contacts are provided by Cys67, Cys71, and Cys74. 4 residues coordinate [2Fe-2S] cluster: Cys110, Cys143, Cys202, and Arg272.

The protein belongs to the radical SAM superfamily. Biotin synthase family. Homodimer. [4Fe-4S] cluster is required as a cofactor. [2Fe-2S] cluster serves as cofactor.

The enzyme catalyses (4R,5S)-dethiobiotin + (sulfur carrier)-SH + 2 reduced [2Fe-2S]-[ferredoxin] + 2 S-adenosyl-L-methionine = (sulfur carrier)-H + biotin + 2 5'-deoxyadenosine + 2 L-methionine + 2 oxidized [2Fe-2S]-[ferredoxin]. The protein operates within cofactor biosynthesis; biotin biosynthesis; biotin from 7,8-diaminononanoate: step 2/2. Its function is as follows. Catalyzes the conversion of dethiobiotin (DTB) to biotin by the insertion of a sulfur atom into dethiobiotin via a radical-based mechanism. The protein is Biotin synthase of Mycolicibacterium gilvum (strain PYR-GCK) (Mycobacterium gilvum (strain PYR-GCK)).